A 172-amino-acid polypeptide reads, in one-letter code: Large ribosomal subunit protein uL10 (172 aa).

It belongs to the universal ribosomal protein uL10 family. Part of the ribosomal stalk of the 50S ribosomal subunit. The N-terminus interacts with L11 and the large rRNA to form the base of the stalk. The C-terminus forms an elongated spine to which L12 dimers bind in a sequential fashion forming a multimeric L10(L12)X complex.

Functionally, forms part of the ribosomal stalk, playing a central role in the interaction of the ribosome with GTP-bound translation factors. In Francisella tularensis subsp. mediasiatica (strain FSC147), this protein is Large ribosomal subunit protein uL10.